We begin with the raw amino-acid sequence, 370 residues long: Alpha-ketoglutarate-dependent xanthine dioxygenase xanA (370 aa).

Position 107 (H107) interacts with substrate. Fe cation contacts are provided by H149 and D151. Positions 195 and 325 each coordinate 2-oxoglutarate. H340 contacts Fe cation. A 2-oxoglutarate-binding site is contributed by R352.

The protein belongs to the TfdA dioxygenase family. Fe(2+) is required as a cofactor. Post-translationally, glycosylated. Is subject to both N- and O-linked glycosylation. In terms of processing, phosphorylated.

Its subcellular location is the cytoplasm. The protein resides in the cytosol. It carries out the reaction xanthine + 2-oxoglutarate + O2 = urate + succinate + CO2. Cu(2+) and Zn(2+) completely inhibit the xanthine dioxygenase activity, whereas Co(2+), Mn(2+), and Ni(2+) partially inhibit the activity. The inactive metal ions are presumed to compete for the Fe(2+)-binding site. N-oxalylglycine (NOG), a known inhibitor of several Fe(2+)/alpha-ketoglutarate-dependent dioxygenase family members, competes with alpha-ketoglutarate and provides a Ki of 0.12 uM for inhibition. 6,8-dihydroxypurine acts as a slow-binding competitive inhibitor. The thiol-specific inhibitors 5,5'-dithiobis(2-nitrobenzoic acid) (DTNB) and iodoacetamide, inhibit also the catalytic activity. In terms of biological role, alpha-ketoglutarate-dependent xanthine dioxygenase is a non-heme mononuclear Fe(2+) enzyme that decarboxylates alpha-ketoglutarate to succinate and CO(2) while hydroxylating xanthine to generate uric acid. Allows xanthine utilization as a nitrogen source. Whereas xanA is highly specific for xanthine, alpha-ketoadipic acid can replace alpha-ketoglutarate as a cosubstrate. Exhibits ferroxidase activity in the absence of substrates. The polypeptide is Alpha-ketoglutarate-dependent xanthine dioxygenase xanA (Emericella nidulans (Aspergillus nidulans)).